The chain runs to 167 residues: Small heat shock protein C1 (167 aa).

The sHSP domain maps to 59-167; it reads PLYESNSIKS…EQDAREITIN (109 aa).

It belongs to the small heat shock protein (HSP20) family.

The polypeptide is Small heat shock protein C1 (hspC1) (Rickettsia felis (strain ATCC VR-1525 / URRWXCal2) (Rickettsia azadi)).